A 487-amino-acid chain; its full sequence is NADH-quinone oxidoreductase subunit N (487 aa).

14 consecutive transmembrane segments (helical) span residues Leu-8–Ile-28, Phe-35–Val-55, Gly-78–Tyr-98, Glu-104–His-124, Leu-125–Tyr-145, Tyr-159–Ala-179, Ile-203–Phe-223, Pro-235–Met-255, Leu-271–Gln-291, Leu-297–Gln-317, Ile-328–Leu-348, Ala-376–Gly-396, Leu-409–Leu-428, and Ala-451–Ile-471.

Belongs to the complex I subunit 2 family. As to quaternary structure, NDH-1 is composed of 13 different subunits. Subunits NuoA, H, J, K, L, M, N constitute the membrane sector of the complex.

The protein localises to the cell inner membrane. The catalysed reaction is a quinone + NADH + 5 H(+)(in) = a quinol + NAD(+) + 4 H(+)(out). Functionally, NDH-1 shuttles electrons from NADH, via FMN and iron-sulfur (Fe-S) centers, to quinones in the respiratory chain. The immediate electron acceptor for the enzyme in this species is believed to be ubiquinone. Couples the redox reaction to proton translocation (for every two electrons transferred, four hydrogen ions are translocated across the cytoplasmic membrane), and thus conserves the redox energy in a proton gradient. This is NADH-quinone oxidoreductase subunit N from Yersinia pestis bv. Antiqua (strain Angola).